The primary structure comprises 364 residues: Aminomethyltransferase (364 aa).

Belongs to the GcvT family. In terms of assembly, the glycine cleavage system is composed of four proteins: P, T, L and H.

The catalysed reaction is N(6)-[(R)-S(8)-aminomethyldihydrolipoyl]-L-lysyl-[protein] + (6S)-5,6,7,8-tetrahydrofolate = N(6)-[(R)-dihydrolipoyl]-L-lysyl-[protein] + (6R)-5,10-methylene-5,6,7,8-tetrahydrofolate + NH4(+). In terms of biological role, the glycine cleavage system catalyzes the degradation of glycine. The sequence is that of Aminomethyltransferase from Shewanella sp. (strain ANA-3).